The primary structure comprises 157 residues: Small ribosomal subunit protein uS7 (157 aa).

The protein belongs to the universal ribosomal protein uS7 family. As to quaternary structure, part of the 30S ribosomal subunit. Contacts proteins S9 and S11.

One of the primary rRNA binding proteins, it binds directly to 16S rRNA where it nucleates assembly of the head domain of the 30S subunit. Is located at the subunit interface close to the decoding center, probably blocks exit of the E-site tRNA. The chain is Small ribosomal subunit protein uS7 from Chlamydia trachomatis serovar A (strain ATCC VR-571B / DSM 19440 / HAR-13).